The primary structure comprises 74 residues: Cold shock-like protein CspD (74 aa).

Residues 4-64 (GTVKWFNNAK…GPKGNHASVI (61 aa)) form the CSD domain.

Homodimer.

It localises to the cytoplasm. Inhibits DNA replication at both initiation and elongation steps, most probably by binding to the opened, single-stranded regions at replication forks. Plays a regulatory role in chromosomal replication in nutrient-depleted cells. The sequence is that of Cold shock-like protein CspD (cspD) from Escherichia coli O157:H7.